The sequence spans 602 residues: Elongation factor 4 (602 aa).

Residues glutamate 7 to lysine 188 enclose the tr-type G domain. Residues aspartate 19–threonine 24 and asparagine 135–aspartate 138 each bind GTP.

This sequence belongs to the TRAFAC class translation factor GTPase superfamily. Classic translation factor GTPase family. LepA subfamily.

The protein resides in the cell inner membrane. It carries out the reaction GTP + H2O = GDP + phosphate + H(+). Functionally, required for accurate and efficient protein synthesis under certain stress conditions. May act as a fidelity factor of the translation reaction, by catalyzing a one-codon backward translocation of tRNAs on improperly translocated ribosomes. Back-translocation proceeds from a post-translocation (POST) complex to a pre-translocation (PRE) complex, thus giving elongation factor G a second chance to translocate the tRNAs correctly. Binds to ribosomes in a GTP-dependent manner. The sequence is that of Elongation factor 4 from Chlamydia trachomatis serovar L2 (strain ATCC VR-902B / DSM 19102 / 434/Bu).